The primary structure comprises 83 residues: Short neurotoxin 1 (83 aa).

Positions 1–21 (MKTLLLTLVVVTIVCLDLGYT) are cleaved as a signal peptide. 4 disulfide bridges follow: cysteine 24–cysteine 45, cysteine 38–cysteine 62, cysteine 64–cysteine 75, and cysteine 76–cysteine 81.

Belongs to the three-finger toxin family. Short-chain subfamily. Type I alpha-neurotoxin sub-subfamily. In terms of tissue distribution, expressed by the venom gland.

The protein resides in the secreted. Its function is as follows. Binds to muscle nicotinic acetylcholine receptor (nAChR) and inhibit acetylcholine from binding to the receptor, thereby impairing neuromuscular transmission. The protein is Short neurotoxin 1 of Pseudechis australis (Mulga snake).